Here is a 94-residue protein sequence, read N- to C-terminus: Large ribosomal subunit protein bL25 (94 aa).

It belongs to the bacterial ribosomal protein bL25 family. In terms of assembly, part of the 50S ribosomal subunit; part of the 5S rRNA/L5/L18/L25 subcomplex. Contacts the 5S rRNA. Binds to the 5S rRNA independently of L5 and L18.

In terms of biological role, this is one of the proteins that binds to the 5S RNA in the ribosome where it forms part of the central protuberance. The chain is Large ribosomal subunit protein bL25 from Photorhabdus laumondii subsp. laumondii (strain DSM 15139 / CIP 105565 / TT01) (Photorhabdus luminescens subsp. laumondii).